A 148-amino-acid chain; its full sequence is Lysozyme-like protein 6 (148 aa).

Residues 1-19 (MTKALLIYLVSSFLALNQA) form the signal peptide. The 129-residue stretch at 20–148 (SLISRCDLAQ…FYWLTGCRLR (129 aa)) folds into the C-type lysozyme domain. 4 disulfides stabilise this stretch: Cys-25–Cys-145, Cys-49–Cys-133, Cys-83–Cys-98, and Cys-94–Cys-112. Catalysis depends on residues Glu-54 and Asp-71.

It belongs to the glycosyl hydrolase 22 family. Monomer. In terms of tissue distribution, expressed in testis, epididymis and spermatozoa (at protein level). Expressed in late-stage spermatocytes and round spermatids.

The protein resides in the secreted. It localises to the cell surface. Its subcellular location is the cell projection. The protein localises to the cilium. It is found in the flagellum. It catalyses the reaction Hydrolysis of (1-&gt;4)-beta-linkages between N-acetylmuramic acid and N-acetyl-D-glucosamine residues in a peptidoglycan and between N-acetyl-D-glucosamine residues in chitodextrins.. Functionally, may be involved sperm-egg plasma membrane adhesion and fusion during fertilization. Exhibits bacteriolytic activity in vitro against Micrococcus luteus and Staphylococcus aureus. Shows weak bacteriolytic activity against Gram-positive bacteria at physiological pH. Bacteriolytic activity is pH-dependent, with a maximum at around pH 5.6. The sequence is that of Lysozyme-like protein 6 (LYZL6) from Homo sapiens (Human).